Reading from the N-terminus, the 33-residue chain is U-limacoditoxin(13)-As11 (33 aa).

The first 19 residues, 1 to 19 (MFKLLLVLALTMLAQSALA), serve as a signal peptide directing secretion. Phe-32 is subject to Phenylalanine amide.

This sequence belongs to the FARP (FMRFamide related peptide) family. Expressed by the venom secretory cell of the spine. The spine is a cuticular structure containing a single large nucleated venom-secreting cell at its base. It is an independent unit capable of producing, storing and injecting venom. On the back of A.stimulea caterpillars, spines are grouped together by 50 to 100 to form scoli, of which there are eight.

The protein localises to the secreted. Is toxic when injected into Drosophila melanogaster. Also shows a low anthelmintic activity against the parasitic nematode H.contortus (drug susceptible Kirby isolate). This chain is U-limacoditoxin(13)-As11, found in Acharia stimulea (Saddleback caterpillar moth).